The chain runs to 47 residues: Cytochrome b559 subunit beta (47 aa).

The chain crosses the membrane as a helical span at residues 22–38; it reads WLAVHTLAIPTVFFLGA. H26 contributes to the heme binding site.

It belongs to the PsbE/PsbF family. Heterodimer of an alpha subunit and a beta subunit. PSII is composed of 1 copy each of membrane proteins PsbA, PsbB, PsbC, PsbD, PsbE, PsbF, PsbH, PsbI, PsbJ, PsbK, PsbL, PsbM, PsbT, PsbX, PsbY, PsbZ, Psb30/Ycf12, peripheral proteins PsbO, CyanoQ (PsbQ), PsbU, PsbV and a large number of cofactors. It forms dimeric complexes. Heme b is required as a cofactor.

The protein resides in the cellular thylakoid membrane. This b-type cytochrome is tightly associated with the reaction center of photosystem II (PSII). PSII is a light-driven water:plastoquinone oxidoreductase that uses light energy to abstract electrons from H(2)O, generating O(2) and a proton gradient subsequently used for ATP formation. It consists of a core antenna complex that captures photons, and an electron transfer chain that converts photonic excitation into a charge separation. The protein is Cytochrome b559 subunit beta of Synechococcus sp. (strain JA-3-3Ab) (Cyanobacteria bacterium Yellowstone A-Prime).